Here is an 805-residue protein sequence, read N- to C-terminus: Leucine--tRNA ligase (805 aa).

The 'HIGH' region signature appears at 40–51 (PYPSGQGLHVGH). The 'KMSKS' region signature appears at 577-581 (KMSKS). ATP is bound at residue lysine 580.

This sequence belongs to the class-I aminoacyl-tRNA synthetase family.

It localises to the cytoplasm. It catalyses the reaction tRNA(Leu) + L-leucine + ATP = L-leucyl-tRNA(Leu) + AMP + diphosphate. The polypeptide is Leucine--tRNA ligase (Limosilactobacillus fermentum (strain NBRC 3956 / LMG 18251) (Lactobacillus fermentum)).